Here is a 352-residue protein sequence, read N- to C-terminus: Dead end protein homolog 1 (352 aa).

2 consecutive RRM domains span residues 58–136 (SEVY…RSTE) and 138–218 (CELT…WLKP). An Omega-N-methylarginine modification is found at Arg-336.

As to quaternary structure, interacts with APOBEC3. In terms of tissue distribution, isoform 1 and isoform 2 are expressed in testis. Isoform 1 is expressed continuously in post natal (PN) testis although levels are low between PN1 to PN6. Isoform 2 is expressed from PN 20 onwards. Isoform 2 is strongly expressed in meiotic and in post-meiotic germ cells of the testis with highest expression at the elongated spermatid stage (at protein level). Expressed in testis and heart. Expressed in germ cells and genital ridges. Not detected in testicular tumors.

The protein resides in the nucleus. It is found in the cytoplasm. Functionally, RNA-binding factor that positively regulates gene expression by prohibiting miRNA-mediated gene suppression. Relieves miRNA repression in germline cells. Prohibits the function of several miRNAs by blocking the accessibility of target mRNAs. Sequence-specific RNA-binding factor that binds specifically to U-rich regions (URRs) in the 3' untranslated region (3'-UTR) of several mRNAs. Does not bind to miRNAs. Isoform 1 may play a role during primordial germ cell (PGC) survival. However, does not seem to be essential for PGC migration. The polypeptide is Dead end protein homolog 1 (Dnd1) (Mus musculus (Mouse)).